A 228-amino-acid chain; its full sequence is Uracil-DNA glycosylase (228 aa).

D64 functions as the Proton acceptor in the catalytic mechanism.

The protein belongs to the uracil-DNA glycosylase (UDG) superfamily. UNG family.

The protein localises to the cytoplasm. It catalyses the reaction Hydrolyzes single-stranded DNA or mismatched double-stranded DNA and polynucleotides, releasing free uracil.. Its function is as follows. Excises uracil residues from the DNA which can arise as a result of misincorporation of dUMP residues by DNA polymerase or due to deamination of cytosine. The sequence is that of Uracil-DNA glycosylase from Pectobacterium atrosepticum (strain SCRI 1043 / ATCC BAA-672) (Erwinia carotovora subsp. atroseptica).